The sequence spans 384 residues: Putative RNA methyltransferase slr0064 (384 aa).

The 112-residue stretch at 53 to 164 folds into the THUMP domain; that stretch reads LLYRINLWSR…QNHCQLSLDS (112 aa).

The protein belongs to the methyltransferase superfamily.

The chain is Putative RNA methyltransferase slr0064 from Synechocystis sp. (strain ATCC 27184 / PCC 6803 / Kazusa).